Reading from the N-terminus, the 128-residue chain is Aspartate 1-decarboxylase (128 aa).

Residue S25 is the Schiff-base intermediate with substrate; via pyruvic acid of the active site. S25 is subject to Pyruvic acid (Ser). T57 is a substrate binding site. Residue Y58 is the Proton donor of the active site. 73–75 (GSA) provides a ligand contact to substrate.

This sequence belongs to the PanD family. Heterooctamer of four alpha and four beta subunits. It depends on pyruvate as a cofactor. Is synthesized initially as an inactive proenzyme, which is activated by self-cleavage at a specific serine bond to produce a beta-subunit with a hydroxyl group at its C-terminus and an alpha-subunit with a pyruvoyl group at its N-terminus.

The protein resides in the cytoplasm. The enzyme catalyses L-aspartate + H(+) = beta-alanine + CO2. The protein operates within cofactor biosynthesis; (R)-pantothenate biosynthesis; beta-alanine from L-aspartate: step 1/1. Its function is as follows. Catalyzes the pyruvoyl-dependent decarboxylation of aspartate to produce beta-alanine. This Burkholderia mallei (strain NCTC 10247) protein is Aspartate 1-decarboxylase.